We begin with the raw amino-acid sequence, 108 residues long: Iron-sulfur cluster assembly protein CyaY (108 aa).

It belongs to the frataxin family.

Its function is as follows. Involved in iron-sulfur (Fe-S) cluster assembly. May act as a regulator of Fe-S biogenesis. This Burkholderia mallei (strain NCTC 10247) protein is Iron-sulfur cluster assembly protein CyaY.